The sequence spans 264 residues: Thymidylate synthase (264 aa).

Arginine 21 provides a ligand contact to dUMP. Histidine 51 provides a ligand contact to (6R)-5,10-methylene-5,6,7,8-tetrahydrofolate. 126 to 127 (RR) is a dUMP binding site. The Nucleophile role is filled by cysteine 146. DUMP-binding positions include 166–169 (RSCD), asparagine 177, and 207–209 (HLY). (6R)-5,10-methylene-5,6,7,8-tetrahydrofolate is bound at residue aspartate 169. Residue alanine 263 participates in (6R)-5,10-methylene-5,6,7,8-tetrahydrofolate binding.

Belongs to the thymidylate synthase family. Bacterial-type ThyA subfamily. In terms of assembly, homodimer.

The protein resides in the cytoplasm. The enzyme catalyses dUMP + (6R)-5,10-methylene-5,6,7,8-tetrahydrofolate = 7,8-dihydrofolate + dTMP. Its pathway is pyrimidine metabolism; dTTP biosynthesis. Catalyzes the reductive methylation of 2'-deoxyuridine-5'-monophosphate (dUMP) to 2'-deoxythymidine-5'-monophosphate (dTMP) while utilizing 5,10-methylenetetrahydrofolate (mTHF) as the methyl donor and reductant in the reaction, yielding dihydrofolate (DHF) as a by-product. This enzymatic reaction provides an intracellular de novo source of dTMP, an essential precursor for DNA biosynthesis. In Aeromonas salmonicida (strain A449), this protein is Thymidylate synthase.